Consider the following 338-residue polypeptide: Glycerol-3-phosphate dehydrogenase [NAD(P)+] (338 aa).

Residues Trp-20 and Lys-110 each contribute to the NADPH site. Lys-110, Gly-141, and Ser-143 together coordinate sn-glycerol 3-phosphate. An NADPH-binding site is contributed by Ala-145. Sn-glycerol 3-phosphate-binding residues include Lys-197, Asp-250, Ser-260, Arg-261, and Asn-262. Lys-197 functions as the Proton acceptor in the catalytic mechanism. Position 261 (Arg-261) interacts with NADPH. NADPH is bound at residue Glu-287.

This sequence belongs to the NAD-dependent glycerol-3-phosphate dehydrogenase family.

It localises to the cytoplasm. The catalysed reaction is sn-glycerol 3-phosphate + NAD(+) = dihydroxyacetone phosphate + NADH + H(+). The enzyme catalyses sn-glycerol 3-phosphate + NADP(+) = dihydroxyacetone phosphate + NADPH + H(+). Its pathway is membrane lipid metabolism; glycerophospholipid metabolism. Functionally, catalyzes the reduction of the glycolytic intermediate dihydroxyacetone phosphate (DHAP) to sn-glycerol 3-phosphate (G3P), the key precursor for phospholipid synthesis. This Aster yellows witches'-broom phytoplasma (strain AYWB) protein is Glycerol-3-phosphate dehydrogenase [NAD(P)+].